A 255-amino-acid chain; its full sequence is Snake venom serine protease HS112 (255 aa).

A signal peptide spans 1–18; the sequence is MVLIRVIANLLILQLSYA. The propeptide occupies 19–24; that stretch reads QKSSEL. The 222-residue stretch at 25–246 folds into the Peptidase S1 domain; it reads VIGGDECDIN…YLPWIQSIIA (222 aa). Disulfide bonds link Cys31-Cys162, Cys49-Cys65, Cys97-Cys253, Cys141-Cys207, Cys173-Cys186, and Cys197-Cys222. Residues His64 and Asp109 each act as charge relay system in the active site. A glycan (N-linked (GlcNAc...) asparagine) is linked at Asn169. Ser201 acts as the Charge relay system in catalysis. N-linked (GlcNAc...) asparagine glycosylation occurs at Asn248.

This sequence belongs to the peptidase S1 family. Snake venom subfamily. In terms of assembly, monomer. In terms of tissue distribution, expressed by the venom gland.

The protein localises to the secreted. Its function is as follows. Snake venom serine protease that may act in the hemostasis system of the prey. The chain is Snake venom serine protease HS112 from Bothrops jararaca (Jararaca).